A 1005-amino-acid polypeptide reads, in one-letter code: Small G protein signaling modulator 2 (1005 aa).

The 158-residue stretch at His34–His191 folds into the RUN domain. Disordered regions lie at residues Gln95–Ala121 and His205–Glu236. Ser402 and Leu444 each carry phosphoserine. A Rab-GAP TBC domain is found at Gly566–Arg938. Disordered regions lie at residues Phe657–Pro687 and Gly729–Leu761. Over residues Glu672 to Glu681 the composition is skewed to basic and acidic residues. Acidic residues predominate over residues Phe730–Ser740.

It belongs to the RUTBC family. In terms of assembly, interacts with RAB4A, RAB11A, RAP1A, RAP1B, RAP2A and RAP2B. No interaction with RAB27A. Interacts with RAB9A. In terms of tissue distribution, widely expressed.

It is found in the cytoplasm. The protein localises to the melanosome. Possesses GTPase activator activity towards RAB32, RAB33B and RAB38. Regulates the trafficking of melanogenic enzymes TYR, TYRP1 and DCT/TYRP2 to melanosomes in melanocytes by inactivating RAB32 and RAB38. Inhibits RAB32 and RAB38 activation both directly by promoting their GTPase activity and indirectly by disrupting the RAB9A-HPS4 interaction which is required for RAB32/38 activation. This chain is Small G protein signaling modulator 2 (Sgsm2), found in Mus musculus (Mouse).